A 410-amino-acid chain; its full sequence is Ribose 1,5-bisphosphate phosphokinase PhnN (410 aa).

Residues 1-220 form a unknown region; sequence MRYAVYLAPP…VWLLMAGSTS (220 aa). Residues 221-410 are ribose 1,5-bisphosphokinase; the sequence is MRTETGQLIY…SHCHQPITAL (190 aa). ATP is bound at residue 233–240; that stretch reads GPSGAGKD.

It in the C-terminal section; belongs to the ribose 1,5-bisphosphokinase family.

The enzyme catalyses alpha-D-ribose 1,5-bisphosphate + ATP = 5-phospho-alpha-D-ribose 1-diphosphate + ADP. Its pathway is metabolic intermediate biosynthesis; 5-phospho-alpha-D-ribose 1-diphosphate biosynthesis; 5-phospho-alpha-D-ribose 1-diphosphate from D-ribose 5-phosphate (route II): step 3/3. Its function is as follows. Catalyzes the phosphorylation of ribose 1,5-bisphosphate to 5-phospho-D-ribosyl alpha-1-diphosphate (PRPP). In Laribacter hongkongensis (strain HLHK9), this protein is Ribose 1,5-bisphosphate phosphokinase PhnN (phnN).